The sequence spans 88 residues: Acylphosphatase (88 aa).

In terms of domain architecture, Acylphosphatase-like spans 3–88; it reads AARFVVSGVV…VPPTEDFVTG (86 aa). Active-site residues include Arg18 and Asn36.

Belongs to the acylphosphatase family.

It catalyses the reaction an acyl phosphate + H2O = a carboxylate + phosphate + H(+). The protein is Acylphosphatase (acyP) of Xanthomonas euvesicatoria pv. vesicatoria (strain 85-10) (Xanthomonas campestris pv. vesicatoria).